The primary structure comprises 569 residues: Urease subunit alpha (569 aa).

The Urease domain maps to Gly-132–Phe-569. Residues His-137, His-139, and Lys-220 each coordinate Ni(2+). Residue Lys-220 is modified to N6-carboxylysine. A substrate-binding site is contributed by His-222. Positions 249 and 275 each coordinate Ni(2+). Residue His-323 is the Proton donor of the active site. A Ni(2+)-binding site is contributed by Asp-363.

The protein belongs to the metallo-dependent hydrolases superfamily. Urease alpha subunit family. As to quaternary structure, heterotrimer of UreA (gamma), UreB (beta) and UreC (alpha) subunits. Three heterotrimers associate to form the active enzyme. Ni cation serves as cofactor. Post-translationally, carboxylation allows a single lysine to coordinate two nickel ions.

The protein resides in the cytoplasm. It catalyses the reaction urea + 2 H2O + H(+) = hydrogencarbonate + 2 NH4(+). It participates in nitrogen metabolism; urea degradation; CO(2) and NH(3) from urea (urease route): step 1/1. The chain is Urease subunit alpha from Bacillus subtilis (strain 168).